Reading from the N-terminus, the 595-residue chain is Sorting nexin-9 (595 aa).

The region spanning 1 to 62 (MATKARVMYD…PTDYVEILPS (62 aa)) is the SH3 domain. A disordered region spans residues 91–201 (SSSAASNNHQ…GNSRASSSSM (111 aa)). 2 stretches are compositionally biased toward polar residues: residues 111 to 121 (WSASKSGNWES) and 135 to 145 (QRNTNTPNNWD). Phosphoserine is present on residues S116 and S121. Residues 160–169 (GDDDDWDEDW) are compositionally biased toward acidic residues. The span at 191–201 (RGNSRASSSSM) shows a compositional bias: polar residues. A phosphoserine mark is found at S197 and S200. The critical for tubulation activity stretch occupies residues 201-213 (MKIPLNKFPGFAK). A Phosphothreonine modification is found at T216. Y239 is subject to Phosphotyrosine. One can recognise a PX domain in the interval 250–361 (FDCVVADPRK…QFLNFRDEKE (112 aa)). 3 residues coordinate a 1,2-diacyl-sn-glycero-3-phospho-(1D-myo-inositol-4,5-bisphosphate): R286, K288, and R327. K288 carries the post-translational modification N6-acetyllysine. Residues 392–595 (LVEIEQKCEA…RQALSRFPVM (204 aa)) enclose the BAR domain.

This sequence belongs to the sorting nexin family. In terms of assembly, homodimer, and homooligomer. Heterodimer with SNX18. Interacts with ITCH. Interacts (via SH3 domain) with TNK2, WASL and ACTR3. Identified in a complex with TNK2 and clathrin heavy chains. Identified in a complex with the AP-2 complex, clathrin and DNM2. Interacts (via SH3 domain) with DNM1 and DNM2. Identified in an oligomeric complex containing DNM1 and SNX9. Interacts with FCHSD1. Interacts with ADAM9 and ADAM15 cytoplasmic tails. Ubiquitinated by ITCH. In terms of processing, phosphorylated on tyrosine residues by TNK2. Phosphorylation promotes its activity in the degradation of EGFR. Widely expressed, with highest levels in heart and placenta, and lowest levels in thymus and peripheral blood leukocytes.

The protein localises to the cytoplasmic vesicle membrane. Its subcellular location is the cell membrane. It is found in the cytoplasmic vesicle. It localises to the clathrin-coated vesicle. The protein resides in the golgi apparatus. The protein localises to the trans-Golgi network. Its subcellular location is the cell projection. It is found in the ruffle. It localises to the cytoplasm. Involved in endocytosis and intracellular vesicle trafficking, both during interphase and at the end of mitosis. Required for efficient progress through mitosis and cytokinesis. Required for normal formation of the cleavage furrow at the end of mitosis. Plays a role in endocytosis via clathrin-coated pits, but also clathrin-independent, actin-dependent fluid-phase endocytosis. Plays a role in macropinocytosis. Promotes internalization of TNFR. Promotes degradation of EGFR after EGF signaling. Stimulates the GTPase activity of DNM1. Promotes DNM1 oligomerization. Promotes activation of the Arp2/3 complex by WASL, and thereby plays a role in the reorganization of the F-actin cytoskeleton. Binds to membranes enriched in phosphatidylinositol 4,5-bisphosphate and promotes membrane tubulation. Has lower affinity for membranes enriched in phosphatidylinositol 3-phosphate. This chain is Sorting nexin-9 (SNX9), found in Homo sapiens (Human).